The primary structure comprises 402 residues: Propionate kinase (402 aa).

ATP contacts are provided by N11 and K18. N11 serves as a coordination point for Mg(2+). R86 lines the substrate pocket. Residue D143 is the Proton donor/acceptor of the active site. ATP contacts are provided by residues H175, 203 to 207, 278 to 280, and 326 to 330; these read HLGNG, DLR, and GIGEN.

Belongs to the acetokinase family. TdcD subfamily. Homodimer. The cofactor is Mg(2+).

It carries out the reaction propanoate + ATP = propanoyl phosphate + ADP. Its pathway is amino-acid degradation; L-threonine degradation via propanoate pathway; propanoate from L-threonine: step 4/4. Catalyzes the conversion of propionyl phosphate and ADP to propionate and ATP. In Salmonella agona (strain SL483), this protein is Propionate kinase.